The chain runs to 43 residues: Neurotrophic factor BDNF (43 aa).

The protein belongs to the NGF-beta family.

Its subcellular location is the secreted. Its function is as follows. Promotes the survival of neuronal populations that are all located either in the central nervous system or directly connected to it. The polypeptide is Neurotrophic factor BDNF (bdnf) (Raja clavata (Thornback ray)).